The following is a 412-amino-acid chain: D-xylonate dehydratase (412 aa).

Homooctamer.

The catalysed reaction is D-xylonate = 2-dehydro-3-deoxy-D-arabinonate + H2O. Its function is as follows. NADP-dependent D-xylose dehydrogenase involved in the degradation of D-xylose, a major component of hemicelluloses such as xylan. Catalyzes the third reaction in the xylose utilization pathway through dehydratation of D-xylonate into 2-dehydro-3-deoxy-D-xylonate. The polypeptide is D-xylonate dehydratase (Haloferax volcanii (strain ATCC 29605 / DSM 3757 / JCM 8879 / NBRC 14742 / NCIMB 2012 / VKM B-1768 / DS2) (Halobacterium volcanii)).